The following is a 206-amino-acid chain: Small ribosomal subunit protein uS4 (206 aa).

The S4 RNA-binding domain maps to 96–157 (GRLDNVVYRM…KAKKQSRVRA (62 aa)).

This sequence belongs to the universal ribosomal protein uS4 family. In terms of assembly, part of the 30S ribosomal subunit. Contacts protein S5. The interaction surface between S4 and S5 is involved in control of translational fidelity.

In terms of biological role, one of the primary rRNA binding proteins, it binds directly to 16S rRNA where it nucleates assembly of the body of the 30S subunit. Its function is as follows. With S5 and S12 plays an important role in translational accuracy. The protein is Small ribosomal subunit protein uS4 of Sodalis glossinidius (strain morsitans).